A 372-amino-acid chain; its full sequence is Cytochrome b (372 aa).

4 consecutive transmembrane segments (helical) span residues 25–45 (FGSM…FLAI), 69–90 (WIMQ…YIHI), 105–125 (WLSG…GYVL), and 170–190 (FFAL…IHII). 2 residues coordinate heme b: H75 and H89. Heme b is bound by residues H174 and H188. A ubiquinone is bound at residue H193. 4 consecutive transmembrane segments (helical) span residues 218-238 (YKDM…LSFL), 280-300 (LGGT…PFTH), 312-332 (LSQT…WTAT), and 339-358 (FITI…IMTP).

This sequence belongs to the cytochrome b family. As to quaternary structure, the cytochrome bc1 complex contains 3 respiratory subunits (MT-CYB, CYC1 and UQCRFS1), 2 core proteins (UQCRC1 and UQCRC2) and probably 6 low-molecular weight proteins. Heme b serves as cofactor.

The protein resides in the mitochondrion inner membrane. Functionally, component of the ubiquinol-cytochrome c reductase complex (complex III or cytochrome b-c1 complex) that is part of the mitochondrial respiratory chain. The b-c1 complex mediates electron transfer from ubiquinol to cytochrome c. Contributes to the generation of a proton gradient across the mitochondrial membrane that is then used for ATP synthesis. The sequence is that of Cytochrome b (MT-CYB) from Aspidelaps scutatus (Shield-nose snake).